The primary structure comprises 442 residues: 3-ketoacyl-CoA thiolase (442 aa).

Cysteine 105 serves as the catalytic Acyl-thioester intermediate. Catalysis depends on proton acceptor residues histidine 398 and cysteine 428.

It belongs to the thiolase-like superfamily. Thiolase family. Heterotetramer of two alpha chains (FadJ) and two beta chains (FadI).

It localises to the cytoplasm. It catalyses the reaction an acyl-CoA + acetyl-CoA = a 3-oxoacyl-CoA + CoA. It participates in lipid metabolism; fatty acid beta-oxidation. Functionally, catalyzes the final step of fatty acid oxidation in which acetyl-CoA is released and the CoA ester of a fatty acid two carbons shorter is formed. In Aliivibrio fischeri (strain MJ11) (Vibrio fischeri), this protein is 3-ketoacyl-CoA thiolase.